The primary structure comprises 317 residues: Transaldolase (317 aa).

Residue K132 is the Schiff-base intermediate with substrate of the active site.

It belongs to the transaldolase family. Type 1 subfamily. As to quaternary structure, homodimer.

It localises to the cytoplasm. It carries out the reaction D-sedoheptulose 7-phosphate + D-glyceraldehyde 3-phosphate = D-erythrose 4-phosphate + beta-D-fructose 6-phosphate. Its pathway is carbohydrate degradation; pentose phosphate pathway; D-glyceraldehyde 3-phosphate and beta-D-fructose 6-phosphate from D-ribose 5-phosphate and D-xylulose 5-phosphate (non-oxidative stage): step 2/3. Its function is as follows. Transaldolase is important for the balance of metabolites in the pentose-phosphate pathway. The chain is Transaldolase (talB) from Escherichia coli O104:H4 (strain 2009EL-2071).